A 154-amino-acid chain; its full sequence is Protein LOL1 (154 aa).

Putative zinc finger regions lie at residues 34–64, 73–103, and 111–141; these read QLVCSGCRNLLMYPVGATSVCCAVCNAVTAV, QLVCGGCHTLLMYIRGATSVQCSCCHTVNLA, and HVNCGNCMMLLMYQYGARSVKCAVCNFVTSV.

Its subcellular location is the nucleus. Its function is as follows. Positive regulator of reactive oxygen-induced cell death. May be involved in the repression of the copper/zinc superoxide dismutase CSD1 and CSD2 that detoxify accumulating superoxide before the reactive oxygen species (ROS) can trigger a cell death cascade. LSD1 and LOL1 have antagonistic effects on CSD1 and CSD2 accumulation to regulate oxidative stress-induced cell death. The protein is Protein LOL1 (LOL1) of Arabidopsis thaliana (Mouse-ear cress).